The primary structure comprises 918 residues: Calcium-transporting ATPase type 2C member 1 (918 aa).

The Cytoplasmic portion of the chain corresponds to 1–75 (MKVARFQKIP…SEDEPLWKKY (75 aa)). A helical membrane pass occupies residues 76–96 (ISQFKNPLIMLLLASAVISVL). Over 97–98 (MH) the chain is Extracellular. The helical transmembrane segment at 99 to 119 (QFDDAVSITVAILIVVTVAFV) threads the bilayer. The Cytoplasmic portion of the chain corresponds to 120-267 (QEYRSEKSLE…LQKSMDLLGK (148 aa)). A helical transmembrane segment spans residues 268–288 (QLSFYSFGIIGIIMLVGWLLG). Residues 289–302 (KDILEMFTISVSLA) lie on the Extracellular side of the membrane. A helical membrane pass occupies residues 303–323 (VAAIPEGLPIVVTVTLALGVM). Residues 324-703 (RMVKKRAIVK…IYNNIKNFVR (380 aa)) are Cytoplasmic-facing. D350 (4-aspartylphosphate intermediate) is an active-site residue. Residues D643 and D647 each contribute to the Mg(2+) site. Residues 704–724 (FQLSTSIAALTLISLATLMNF) traverse the membrane as a helical segment. Topologically, residues 725–732 (PNPLNAMQ) are extracellular. The chain crosses the membrane as a helical span at residues 733-753 (ILWINIIMDGPPAQSLGVEPV). The Cytoplasmic portion of the chain corresponds to 754 to 773 (DKDVIRKPPRNWKDSILTKN). A helical membrane pass occupies residues 774 to 794 (LILKILVSSIIIVCGTLFVFW). Residues 795 to 842 (RELRDNVITPRDTTMTFTCFVFFDMFNALSSRSQTKSVFEIGLCSNKM) lie on the Extracellular side of the membrane. Residues 843-863 (FCYAVLGSIMGQLLVIYFPPL) traverse the membrane as a helical segment. The Cytoplasmic segment spans residues 864-873 (QKVFQTESLS). The helical transmembrane segment at 874 to 894 (ILDLLFLLGLTSSVCIVAEII) threads the bilayer. Residues 895-918 (KKVERSREKIQKHVSSTSSSFLEV) are Extracellular-facing.

The protein belongs to the cation transport ATPase (P-type) (TC 3.A.3) family. Type IIA subfamily. Monomer. Homodimer.

It is found in the golgi apparatus. Its subcellular location is the trans-Golgi network membrane. It localises to the golgi stack membrane. It catalyses the reaction Ca(2+)(in) + ATP + H2O = Ca(2+)(out) + ADP + phosphate + H(+). The enzyme catalyses Mn(2+)(in) + ATP + H2O = Mn(2+)(out) + ADP + phosphate + H(+). ATP-driven pump that supplies the Golgi apparatus with Ca(2+) and Mn(2+) ions, both essential cofactors for processing and trafficking of newly synthesized proteins in the secretory pathway. Within a catalytic cycle, acquires Ca(2+) or Mn(2+) ions on the cytoplasmic side of the membrane and delivers them to the lumenal side. The transfer of ions across the membrane is coupled to ATP hydrolysis and is associated with a transient phosphorylation that shifts the pump conformation from inward-facing to outward-facing state. Plays a primary role in the maintenance of Ca(2+) homeostasis in the trans-Golgi compartment with a functional impact on Golgi and post-Golgi protein sorting as well as a structural impact on cisternae morphology. Responsible for loading the Golgi stores with Ca(2+) ions in keratinocytes, contributing to keratinocyte differentiation and epidermis integrity. Participates in Ca(2+) and Mn(2+) ions uptake into the Golgi store of hippocampal neurons and regulates protein trafficking required for neural polarity. May also play a role in the maintenance of Ca(2+) and Mn(2+) homeostasis and signaling in the cytosol while preventing cytotoxicity. The polypeptide is Calcium-transporting ATPase type 2C member 1 (ATP2C1) (Pongo abelii (Sumatran orangutan)).